The primary structure comprises 702 residues: MAKITKTFQYGKHTVTLETGEIARQAGGAVIVKFDDTVLLVSAVAAKSAREGQDFFPLTCDYQEKFYAGGRIPGGFFKREGRATEKETLISRLIDRPIRPLFPEDYKNEVQIIATVMSLNPEIDGDIPALIGASAALSLAGTPFKGPIAAAKVGYKDGEYILNPTVSELKESQLELVVAGTANAVLMVESEAALLSEDVMLGAVTFGHREMQKVINAINELTVEAGTKPSTWEAPAKNTALISAVQEAVGPRLGEAFQVRDKLQRRDAISAIKKDVVESLAGRVAAEGWNPAELSKEFGELEYSTMRNSVLDTKVRIDGRALDTVRPIAVKTSVLPRTHGSSLFTRGETQAIVTITLGTARDGQVIDAVSGEYKENFLFHYNFPPYSVGETGRMMGPKRREIGHGRLAKRGVLAVMPSLESFPYTIRVVSEITESNGSSSMASVCGSSLALMDAGVPVKAPVAGIAMGLVKEGDRFVVLSDILGDEDHLGDMDFKVAGTAEGISALQMDIKIEGITEEIMKQALQQAKAGRLHILGEMAHGLTAPREELSDYAPRLLTIKIHPDKIREVIGKGGSTIQAITKETGTQIDIQDDGTIVIASVNAIAAQAAKARIEQITSDVEPGRIYEGKVAKIMDFGAFVTILPGKDGLVHVSQISSDRVEKVGDVLKEGDVVKVKVLEVDKQGRIRLSMKAVEEGEGASAE.

Mg(2+) contacts are provided by D487 and D493. The 60-residue stretch at 554-613 folds into the KH domain; sequence PRLLTIKIHPDKIREVIGKGGSTIQAITKETGTQIDIQDDGTIVIASVNAIAAQAAKARI. The S1 motif domain occupies 623 to 691; sequence GRIYEGKVAK…KQGRIRLSMK (69 aa).

Belongs to the polyribonucleotide nucleotidyltransferase family. Component of the RNA degradosome, which is a multiprotein complex involved in RNA processing and mRNA degradation. The cofactor is Mg(2+).

It localises to the cytoplasm. It carries out the reaction RNA(n+1) + phosphate = RNA(n) + a ribonucleoside 5'-diphosphate. Involved in mRNA degradation. Catalyzes the phosphorolysis of single-stranded polyribonucleotides processively in the 3'- to 5'-direction. In Stenotrophomonas maltophilia (strain R551-3), this protein is Polyribonucleotide nucleotidyltransferase.